The sequence spans 188 residues: Elongation factor P (188 aa).

The protein belongs to the elongation factor P family.

It localises to the cytoplasm. It functions in the pathway protein biosynthesis; polypeptide chain elongation. Functionally, involved in peptide bond synthesis. Stimulates efficient translation and peptide-bond synthesis on native or reconstituted 70S ribosomes in vitro. Probably functions indirectly by altering the affinity of the ribosome for aminoacyl-tRNA, thus increasing their reactivity as acceptors for peptidyl transferase. This is Elongation factor P from Leptospira interrogans serogroup Icterohaemorrhagiae serovar copenhageni (strain Fiocruz L1-130).